The primary structure comprises 107 residues: uncharacterized protein (107 aa).

Residues phenylalanine 34–tyrosine 107 adopt a coiled-coil conformation.

This is an uncharacterized protein from Dictyostelium discoideum (Social amoeba).